The primary structure comprises 299 residues: ATP phosphoribosyltransferase (299 aa).

The protein belongs to the ATP phosphoribosyltransferase family. Long subfamily. As to quaternary structure, equilibrium between an active dimeric form, an inactive hexameric form and higher aggregates. Interconversion between the various forms is largely reversible and is influenced by the natural substrates and inhibitors of the enzyme. It depends on Mg(2+) as a cofactor.

It is found in the cytoplasm. The catalysed reaction is 1-(5-phospho-beta-D-ribosyl)-ATP + diphosphate = 5-phospho-alpha-D-ribose 1-diphosphate + ATP. It participates in amino-acid biosynthesis; L-histidine biosynthesis; L-histidine from 5-phospho-alpha-D-ribose 1-diphosphate: step 1/9. With respect to regulation, feedback inhibited by histidine. Its function is as follows. Catalyzes the condensation of ATP and 5-phosphoribose 1-diphosphate to form N'-(5'-phosphoribosyl)-ATP (PR-ATP). Has a crucial role in the pathway because the rate of histidine biosynthesis seems to be controlled primarily by regulation of HisG enzymatic activity. In Buchnera aphidicola subsp. Diuraphis noxia, this protein is ATP phosphoribosyltransferase.